The following is a 470-amino-acid chain: Ribosomal protein uS12 methylthiotransferase RimO (470 aa).

The region spanning 33 to 143 (NKIGFVSLGC…VLEHVHQYAP (111 aa)) is the MTTase N-terminal domain. [4Fe-4S] cluster contacts are provided by cysteine 42, cysteine 78, cysteine 107, cysteine 175, cysteine 179, and cysteine 182. One can recognise a Radical SAM core domain in the interval 161–398 (LTPKHYAYLK…MLVQQEISAA (238 aa)). One can recognise a TRAM domain in the interval 401 to 467 (QKRIGSTMQV…EYDLWGSVLH (67 aa)).

This sequence belongs to the methylthiotransferase family. RimO subfamily. [4Fe-4S] cluster is required as a cofactor.

The protein localises to the cytoplasm. The enzyme catalyses L-aspartate(89)-[ribosomal protein uS12]-hydrogen + (sulfur carrier)-SH + AH2 + 2 S-adenosyl-L-methionine = 3-methylsulfanyl-L-aspartate(89)-[ribosomal protein uS12]-hydrogen + (sulfur carrier)-H + 5'-deoxyadenosine + L-methionine + A + S-adenosyl-L-homocysteine + 2 H(+). Catalyzes the methylthiolation of an aspartic acid residue of ribosomal protein uS12. This is Ribosomal protein uS12 methylthiotransferase RimO from Vibrio cholerae serotype O1 (strain ATCC 39541 / Classical Ogawa 395 / O395).